Reading from the N-terminus, the 305-residue chain is Homoserine kinase (305 aa).

93–103 provides a ligand contact to ATP; sequence PLSRGLGSSAT.

Belongs to the GHMP kinase family. Homoserine kinase subfamily.

It localises to the cytoplasm. The catalysed reaction is L-homoserine + ATP = O-phospho-L-homoserine + ADP + H(+). The protein operates within amino-acid biosynthesis; L-threonine biosynthesis; L-threonine from L-aspartate: step 4/5. Its function is as follows. Catalyzes the ATP-dependent phosphorylation of L-homoserine to L-homoserine phosphate. The protein is Homoserine kinase of Picosynechococcus sp. (strain ATCC 27264 / PCC 7002 / PR-6) (Agmenellum quadruplicatum).